The sequence spans 318 residues: NADH-ubiquinone oxidoreductase chain 1 (318 aa).

9 helical membrane-spanning segments follow: residues 2-22 (FLMN…FLTL), 37-57 (PNIV…KLFI), 69-89 (LMFT…WIPM), 100-120 (LGVL…LWSG), 136-156 (VAQT…TMMM), 171-191 (HMWL…STLA), 206-226 (ELVS…FFMA), 253-273 (ELFT…FLWI), and 294-314 (LPLT…SAGI).

It belongs to the complex I subunit 1 family.

The protein localises to the mitochondrion inner membrane. The enzyme catalyses a ubiquinone + NADH + 5 H(+)(in) = a ubiquinol + NAD(+) + 4 H(+)(out). Functionally, core subunit of the mitochondrial membrane respiratory chain NADH dehydrogenase (Complex I) that is believed to belong to the minimal assembly required for catalysis. Complex I functions in the transfer of electrons from NADH to the respiratory chain. The immediate electron acceptor for the enzyme is believed to be ubiquinone. This Tolypeutes matacus (Southern three-banded armadillo) protein is NADH-ubiquinone oxidoreductase chain 1 (MT-ND1).